Reading from the N-terminus, the 130-residue chain is MADVNRGNRPLSPHLQVYRLPLAAITSIMTRITGHALVAGIVLITWWLVAAVTSPGAFACADWVVRSWLGFIILTGSMWALWYHLLAGLRHLFYDAGYGLEIEQAHKSSQALIAGSVVLAVLTLIVFFVF.

Over 1-26 (MADVNRGNRPLSPHLQVYRLPLAAIT) the chain is Cytoplasmic. Residues 27 to 52 (SIMTRITGHALVAGIVLITWWLVAAV) form a helical membrane-spanning segment. The Periplasmic portion of the chain corresponds to 53–68 (TSPGAFACADWVVRSW). Residues 69–89 (LGFIILTGSMWALWYHLLAGL) traverse the membrane as a helical segment. Residue His-84 coordinates heme. At 90–109 (RHLFYDAGYGLEIEQAHKSS) the chain is on the cytoplasmic side. Residues 110–130 (QALIAGSVVLAVLTLIVFFVF) form a helical membrane-spanning segment.

Belongs to the cytochrome b560 family. Part of an enzyme complex containing four subunits: a flavoprotein, an iron-sulfur protein, plus two membrane-anchoring proteins, SdhC and SdhD. The complex can form homotrimers. It depends on heme as a cofactor.

It is found in the cell inner membrane. The protein operates within carbohydrate metabolism; tricarboxylic acid cycle. Membrane-anchoring subunit of succinate dehydrogenase (SDH). This chain is Succinate dehydrogenase cytochrome b556 subunit (sdhC), found in Paracoccus denitrificans.